The sequence spans 512 residues: Maturase K (512 aa).

The protein belongs to the intron maturase 2 family. MatK subfamily.

Its subcellular location is the plastid. The protein localises to the chloroplast. In terms of biological role, usually encoded in the trnK tRNA gene intron. Probably assists in splicing its own and other chloroplast group II introns. In Amorphophallus titanum (Titan arum), this protein is Maturase K.